The following is a 266-amino-acid chain: Exosome complex component Rrp42 (266 aa).

Belongs to the RNase PH family. Rrp42 subfamily. In terms of assembly, component of the archaeal exosome complex. Forms a hexameric ring-like arrangement composed of 3 Rrp41-Rrp42 heterodimers. The hexameric ring associates with a trimer of Rrp4 and/or Csl4 subunits.

Its subcellular location is the cytoplasm. Its function is as follows. Non-catalytic component of the exosome, which is a complex involved in RNA degradation. Contributes to the structuring of the Rrp41 active site. This is Exosome complex component Rrp42 from Methanosarcina mazei (strain ATCC BAA-159 / DSM 3647 / Goe1 / Go1 / JCM 11833 / OCM 88) (Methanosarcina frisia).